Here is a 352-residue protein sequence, read N- to C-terminus: Fe(3+) ions import ATP-binding protein FbpC (352 aa).

Residues 5–239 form the ABC transporter domain; sequence LHIGHLSKSF…PADLDAALFI (235 aa). 37-44 serves as a coordination point for ATP; it reads GASGCGKT.

It belongs to the ABC transporter superfamily. Fe(3+) ion importer (TC 3.A.1.10) family. In terms of assembly, the complex is composed of two ATP-binding proteins (FbpC), two transmembrane proteins (FbpB) and a solute-binding protein (FbpA).

Its subcellular location is the cell inner membrane. The catalysed reaction is Fe(3+)(out) + ATP + H2O = Fe(3+)(in) + ADP + phosphate + H(+). Functionally, part of the ABC transporter complex FbpABC involved in Fe(3+) ions import. Responsible for energy coupling to the transport system. This Neisseria gonorrhoeae (strain ATCC 700825 / FA 1090) protein is Fe(3+) ions import ATP-binding protein FbpC.